A 366-amino-acid chain; its full sequence is Transcription factor bHLH74 (366 aa).

Residues 1-11 (MGGESNEGGEM) are compositionally biased toward gly residues. 2 disordered regions span residues 1–20 (MGGE…DDES) and 123–201 (GESS…APKE). 2 stretches are compositionally biased toward basic and acidic residues: residues 123-134 (GESSHEDHHQVS) and 159-170 (KAVEEFQEDPQR). In terms of domain architecture, bHLH spans 212–262 (QATNSHSLAERVRREKISERMRLLQELVPGCNKITGKAVMLDEIINYVQSL).

As to quaternary structure, homodimer. Interacts with IBH1. Binds reversibly to CRY2 after blue light illumination. In terms of tissue distribution, expressed constitutively in roots, leaves, stems, and flowers.

Its subcellular location is the nucleus. Transcriptional activator involved in cell elongation. Regulates the expression of a subset of genes involved in cell expansion by binding to the G-box motif. Binds to chromatin DNA of the FT gene and promotes its expression, and thus triggers flowering in response to blue light. The chain is Transcription factor bHLH74 (BHLH74) from Arabidopsis thaliana (Mouse-ear cress).